The chain runs to 426 residues: Putative F-box/LRR-repeat protein At4g15060 (426 aa).

Residues 25–71 enclose the F-box domain; the sequence is MDKISRLPDDLLVKVLLFLPTKIAVSTSILSKRWEFLWMWLPKLEYH. LRR repeat units follow at residues 50–75, 80–106, 160–187, 188–213, 221–259, 265–290, 311–337, 338–363, and 373–399; these read STSI…NTNY, EQRL…RLKF, ILKL…LLKR, VTYK…VVER, TLSI…KLTD, ETEL…HIDS, CVKV…KLCP, CDSN…EIKL, and DPAC…TWTW.

The protein is Putative F-box/LRR-repeat protein At4g15060 of Arabidopsis thaliana (Mouse-ear cress).